The following is a 293-amino-acid chain: Protease HtpX (293 aa).

2 consecutive transmembrane segments (helical) span residues 4–24 and 34–54; these read IALF…VLSL and GLLI…LLMS. Position 139 (His-139) interacts with Zn(2+). Glu-140 is an active-site residue. Zn(2+) is bound at residue His-143. 2 helical membrane-spanning segments follow: residues 158–178 and 193–213; these read VVNT…AGFL and LIYF…ASII. Glu-222 is a Zn(2+) binding site.

It belongs to the peptidase M48B family. Zn(2+) is required as a cofactor.

Its subcellular location is the cell inner membrane. The protein is Protease HtpX of Salmonella agona (strain SL483).